We begin with the raw amino-acid sequence, 63 residues long: Large ribosomal subunit protein uL29 (63 aa).

This sequence belongs to the universal ribosomal protein uL29 family.

This is Large ribosomal subunit protein uL29 from Psychromonas ingrahamii (strain DSM 17664 / CCUG 51855 / 37).